Reading from the N-terminus, the 578-residue chain is Adhesion G protein-coupled receptor A1 (578 aa).

At 1-22 (MTQWDLKTVLSLPQYPGEFLHP) the chain is on the extracellular side. The helical transmembrane segment at 23–43 (VVYACTAVMLLCLLASVITYI) threads the bilayer. Residues 44-56 (LHQSAIRISRKGR) are Cytoplasmic-facing. The helical transmembrane segment at 57-77 (HALLNFCFHAALTFTVFAGGI) threads the bilayer. At 78-87 (NRTQHPILCQ) the chain is on the extracellular side. Residues 88 to 108 (AVGIALHYSTLSTMLWIGVTA) traverse the membrane as a helical segment. At 109 to 137 (RNIYKQVTKKALPCPGADQPPYPKQPLLR) the chain is on the cytoplasmic side. A helical transmembrane segment spans residues 138–158 (FYLISGGVPFIICGVTAATNI). The Extracellular portion of the chain corresponds to 159 to 178 (RNYGTEDEDVAYCWMAWEPS). A helical transmembrane segment spans residues 179–199 (LGAFYGPAAFIALVTCVYFLC). Residues 200-262 (TYVQLRRHPE…NEHSFKAQLR (63 aa)) are Cytoplasmic-facing. Residues 216–236 (ERTEEQQRLAVPESGHRHGVR) form a disordered region. A helical membrane pass occupies residues 263–283 (AAAFTLFLFTATWTFGALAVS). Over 284 to 289 (QGHFLD) the chain is Extracellular. Residues 290–310 (MIFSCLYGAFCVTLGLFVLIH) traverse the membrane as a helical segment. 2 disordered regions span residues 463-486 (PSSLDGSPHSSRSESPTSSLEGPM) and 537-578 (SLPF…ETTV). Residues 469-481 (SPHSSRSESPTSS) show a composition bias toward low complexity. The segment covering 537–548 (SLPFGGPSQNGL) has biased composition (polar residues).

This sequence belongs to the G-protein coupled receptor 2 family. Adhesion G-protein coupled receptor (ADGR) subfamily. As to expression, predominantly expressed in CNS.

Its subcellular location is the membrane. The protein is Adhesion G protein-coupled receptor A1 of Mus musculus (Mouse).